A 135-amino-acid chain; its full sequence is Large ribosomal subunit protein uL22 (135 aa).

This sequence belongs to the universal ribosomal protein uL22 family. As to quaternary structure, part of the 50S ribosomal subunit.

This protein binds specifically to 23S rRNA; its binding is stimulated by other ribosomal proteins, e.g. L4, L17, and L20. It is important during the early stages of 50S assembly. It makes multiple contacts with different domains of the 23S rRNA in the assembled 50S subunit and ribosome. Its function is as follows. The globular domain of the protein is located near the polypeptide exit tunnel on the outside of the subunit, while an extended beta-hairpin is found that lines the wall of the exit tunnel in the center of the 70S ribosome. This Christiangramia forsetii (strain DSM 17595 / CGMCC 1.15422 / KT0803) (Gramella forsetii) protein is Large ribosomal subunit protein uL22.